The following is a 109-amino-acid chain: MEKTTTSSKPLSRSEINKIIAVATGVKEAKIKEIFKYLNTLLLNELVSRSVCILPENLGKLRITIRNARIQKDMKTGEMKHIPPKPLVRYSPSKTIKETAAKVRWKYAD.

This is an uncharacterized protein from Mycoplasma pneumoniae (strain ATCC 29342 / M129 / Subtype 1) (Mycoplasmoides pneumoniae).